Reading from the N-terminus, the 338-residue chain is DNA-directed RNA polymerase subunit alpha (338 aa).

The interval 1 to 225 is alpha N-terminal domain (alpha-NTD); the sequence is MLISQRPTIT…ELFGLARELN (225 aa). The tract at residues 242–338 is alpha C-terminal domain (alpha-CTD); the sequence is YIAAYSMPIE…YIDVEAEDSE (97 aa). A disordered region spans residues 319–338; the sequence is LEGYDAETGGYIDVEAEDSE.

Belongs to the RNA polymerase alpha chain family. In terms of assembly, homodimer. The RNAP catalytic core consists of 2 alpha, 1 beta, 1 beta' and 1 omega subunit. When a sigma factor is associated with the core the holoenzyme is formed, which can initiate transcription.

The enzyme catalyses RNA(n) + a ribonucleoside 5'-triphosphate = RNA(n+1) + diphosphate. Its function is as follows. DNA-dependent RNA polymerase catalyzes the transcription of DNA into RNA using the four ribonucleoside triphosphates as substrates. In Corynebacterium glutamicum (strain ATCC 13032 / DSM 20300 / JCM 1318 / BCRC 11384 / CCUG 27702 / LMG 3730 / NBRC 12168 / NCIMB 10025 / NRRL B-2784 / 534), this protein is DNA-directed RNA polymerase subunit alpha.